Here is a 320-residue protein sequence, read N- to C-terminus: Na(+)-translocating NADH-quinone reductase subunit C (320 aa).

The chain crosses the membrane as a helical span at residues 16–36 (WYIVSFILGLSLFAGVLLSTI). Thr-285 is subject to FMN phosphoryl threonine.

This sequence belongs to the NqrC family. In terms of assembly, composed of six subunits; NqrA, NqrB, NqrC, NqrD, NqrE and NqrF. FMN is required as a cofactor.

The protein resides in the cell inner membrane. It carries out the reaction a ubiquinone + n Na(+)(in) + NADH + H(+) = a ubiquinol + n Na(+)(out) + NAD(+). Functionally, NQR complex catalyzes the reduction of ubiquinone-1 to ubiquinol by two successive reactions, coupled with the transport of Na(+) ions from the cytoplasm to the periplasm. NqrA to NqrE are probably involved in the second step, the conversion of ubisemiquinone to ubiquinol. The sequence is that of Na(+)-translocating NADH-quinone reductase subunit C from Chlamydia pneumoniae (Chlamydophila pneumoniae).